We begin with the raw amino-acid sequence, 929 residues long: Lon protease homolog 2, peroxisomal (929 aa).

Positions Leu-11–Leu-257 constitute a Lon N-terminal domain. The tract at residues Gly-302–Asp-325 is disordered. An ATP-binding site is contributed by Gly-484–Thr-491. In terms of domain architecture, Lon proteolytic spans His-727 to Asp-914. Active-site residues include Ser-820 and Lys-863. The Microbody targeting signal motif lies at Ser-927–Leu-929.

This sequence belongs to the peptidase S16 family.

Its subcellular location is the peroxisome matrix. The catalysed reaction is Hydrolysis of proteins in presence of ATP.. ATP-dependent serine protease that mediates the selective degradation of misfolded and unassembled polypeptides in the peroxisomal matrix. Necessary for type 2 peroxisome targeting signal (PTS2)-containing protein processing and facilitates peroxisome matrix protein import. This Aspergillus niger (strain ATCC MYA-4892 / CBS 513.88 / FGSC A1513) protein is Lon protease homolog 2, peroxisomal.